Here is a 493-residue protein sequence, read N- to C-terminus: Glutamate--tRNA ligase (493 aa).

The 'HIGH' region signature appears at 9–19; sequence PSPTGDPHVGT. Positions 249-253 match the 'KMSKS' region motif; it reads KLSKR. Lys-252 is a binding site for ATP.

Belongs to the class-I aminoacyl-tRNA synthetase family. Glutamate--tRNA ligase type 1 subfamily. In terms of assembly, monomer.

It is found in the cytoplasm. The catalysed reaction is tRNA(Glu) + L-glutamate + ATP = L-glutamyl-tRNA(Glu) + AMP + diphosphate. Functionally, catalyzes the attachment of glutamate to tRNA(Glu) in a two-step reaction: glutamate is first activated by ATP to form Glu-AMP and then transferred to the acceptor end of tRNA(Glu). The polypeptide is Glutamate--tRNA ligase (Marinobacter nauticus (strain ATCC 700491 / DSM 11845 / VT8) (Marinobacter aquaeolei)).